A 292-amino-acid polypeptide reads, in one-letter code: Shikimate dehydrogenase (NADP(+)) (292 aa).

Residues 22-24 (SLS) and Ser-69 contribute to the shikimate site. Catalysis depends on Lys-73, which acts as the Proton acceptor. Shikimate contacts are provided by Asn-94 and Asp-111. NADP(+)-binding positions include 135–139 (GVGGA) and Ile-236. Residue Tyr-238 coordinates shikimate. An NADP(+)-binding site is contributed by Gly-260.

The protein belongs to the shikimate dehydrogenase family. In terms of assembly, homodimer.

It carries out the reaction shikimate + NADP(+) = 3-dehydroshikimate + NADPH + H(+). The protein operates within metabolic intermediate biosynthesis; chorismate biosynthesis; chorismate from D-erythrose 4-phosphate and phosphoenolpyruvate: step 4/7. In terms of biological role, involved in the biosynthesis of the chorismate, which leads to the biosynthesis of aromatic amino acids. Catalyzes the reversible NADPH linked reduction of 3-dehydroshikimate (DHSA) to yield shikimate (SA). In Streptococcus pyogenes serotype M28 (strain MGAS6180), this protein is Shikimate dehydrogenase (NADP(+)).